Consider the following 505-residue polypeptide: Lysine--tRNA ligase (505 aa).

Positions 415 and 422 each coordinate Mg(2+).

It belongs to the class-II aminoacyl-tRNA synthetase family. Homodimer. The cofactor is Mg(2+).

The protein localises to the cytoplasm. The catalysed reaction is tRNA(Lys) + L-lysine + ATP = L-lysyl-tRNA(Lys) + AMP + diphosphate. This is Lysine--tRNA ligase from Cronobacter sakazakii (strain ATCC BAA-894) (Enterobacter sakazakii).